Here is a 425-residue protein sequence, read N- to C-terminus: MHDIRLLRDQLDVLREGMRRRGKLTELGDVLDRAESLEQARRTAITELEAQQARRNKVTQEVAQRRKAGEDATALIAEGRAIGEQITALEQRRNEADAAVQAMLYELPNIPLADVPEGDETANTVVRTWGTPRTPDASIVPHWDKGEALGMLDLARGAKISGSGFIVYRNRGARLVRALMNMMLDIHTEEHGYEETWVPLVVNRASMTGTGNFPKFEEDAYAITEDELFLIPTAEVPVTNLYRDEILDAEELPKRFCAFSACFRREAGAAGKDTRGLLRVHEFDKVELVRYANPETSLEELELLTSQAETILKRLELPYRVLLLAAGDTGFSSAKTYDLEVFAPGVGKWLEVSSCSLFTDFQARRANIRYRPAAGEKPRFVHTLNGSALAFSRIIASLLEHHQQPDGSVRIPEALQPYFGRAVLA.

An L-serine-binding site is contributed by 233–235 (TAE). Residues 264–266 (RRE) and Val-280 each bind ATP. Glu-287 contributes to the L-serine binding site. 351–354 (EVSS) provides a ligand contact to ATP. Position 387 (Ser-387) interacts with L-serine.

This sequence belongs to the class-II aminoacyl-tRNA synthetase family. Type-1 seryl-tRNA synthetase subfamily. Homodimer. The tRNA molecule binds across the dimer.

The protein localises to the cytoplasm. The catalysed reaction is tRNA(Ser) + L-serine + ATP = L-seryl-tRNA(Ser) + AMP + diphosphate + H(+). The enzyme catalyses tRNA(Sec) + L-serine + ATP = L-seryl-tRNA(Sec) + AMP + diphosphate + H(+). It participates in aminoacyl-tRNA biosynthesis; selenocysteinyl-tRNA(Sec) biosynthesis; L-seryl-tRNA(Sec) from L-serine and tRNA(Sec): step 1/1. Its function is as follows. Catalyzes the attachment of serine to tRNA(Ser). Is also able to aminoacylate tRNA(Sec) with serine, to form the misacylated tRNA L-seryl-tRNA(Sec), which will be further converted into selenocysteinyl-tRNA(Sec). This Gemmatimonas aurantiaca (strain DSM 14586 / JCM 11422 / NBRC 100505 / T-27) protein is Serine--tRNA ligase.